The primary structure comprises 176 residues: Acireductone dioxygenase (176 aa).

A disordered region spans residues 1-21 (MKAYWYDNKPGDQREPHDSGR). Residues 9-20 (KPGDQREPHDSG) show a composition bias toward basic and acidic residues. Residues H81, H83, E87, and H126 each coordinate Fe(2+). 4 residues coordinate Ni(2+): H81, H83, E87, and H126.

It belongs to the acireductone dioxygenase (ARD) family. Requires Fe(2+) as cofactor. The cofactor is Ni(2+).

It localises to the cytoplasm. The protein resides in the nucleus. It carries out the reaction 1,2-dihydroxy-5-(methylsulfanyl)pent-1-en-3-one + O2 = 4-methylsulfanyl-2-oxobutanoate + formate + 2 H(+). It catalyses the reaction 1,2-dihydroxy-5-(methylsulfanyl)pent-1-en-3-one + O2 = 3-(methylsulfanyl)propanoate + CO + formate + 2 H(+). The protein operates within amino-acid biosynthesis; L-methionine biosynthesis via salvage pathway; L-methionine from S-methyl-5-thio-alpha-D-ribose 1-phosphate: step 5/6. Catalyzes 2 different reactions between oxygen and the acireductone 1,2-dihydroxy-3-keto-5-methylthiopentene (DHK-MTPene) depending upon the metal bound in the active site. Fe-containing acireductone dioxygenase (Fe-ARD) produces formate and 2-keto-4-methylthiobutyrate (KMTB), the alpha-ketoacid precursor of methionine in the methionine recycle pathway. Ni-containing acireductone dioxygenase (Ni-ARD) produces methylthiopropionate, carbon monoxide and formate, and does not lie on the methionine recycle pathway. This Aspergillus fumigatus (strain ATCC MYA-4609 / CBS 101355 / FGSC A1100 / Af293) (Neosartorya fumigata) protein is Acireductone dioxygenase (adi1).